Consider the following 444-residue polypeptide: Transcriptional regulatory protein GlrR (444 aa).

One can recognise a Response regulatory domain in the interval 7–121; sequence HLLLVDDDPG…ALYQAIDDAL (115 aa). Position 56 is a 4-aspartylphosphate (Asp-56). The 231-residue stretch at 136-366 folds into the Sigma-54 factor interaction domain; sequence IVTRSPLMLR…VNVIEQCVAL (231 aa). Residues 164–171 and 227–236 contribute to the ATP site; these read GQSGTGKE and AEGGTLFLDE. The H-T-H motif DNA-binding region spans 414–433; the sequence is VTHAARMAGRNRTEFYKLLS.

Post-translationally, phosphorylated by GlrK.

It is found in the cytoplasm. Member of the two-component regulatory system GlrR/GlrK that up-regulates transcription of the glmY sRNA when cells enter the stationary growth phase. Regulates glmY transcription by binding to three conserved sites in the purL-glmY intergenic region. The protein is Transcriptional regulatory protein GlrR (glrR) of Escherichia coli (strain K12).